Consider the following 155-residue polypeptide: Catabolic 3-dehydroquinase (155 aa).

The active-site Proton acceptor is the Tyr-24. Substrate is bound by residues Asn-75, His-81, and Asp-88. The active-site Proton donor is the His-101. Residues 102–103 (VS) and Arg-112 contribute to the substrate site.

It belongs to the type-II 3-dehydroquinase family. In terms of assembly, homododecamer. Adopts a ring-like structure, composed of an arrangement of two hexameric rings stacked on top of one another.

The enzyme catalyses 3-dehydroquinate = 3-dehydroshikimate + H2O. It functions in the pathway aromatic compound metabolism; 3,4-dihydroxybenzoate biosynthesis; 3,4-dihydroxybenzoate from 3-dehydroquinate: step 1/2. Functionally, is involved in the catabolism of quinate. Allows the utilization of quinate as carbon source via the beta-ketoadipate pathway. This chain is Catabolic 3-dehydroquinase, found in Penicillium rubens (strain ATCC 28089 / DSM 1075 / NRRL 1951 / Wisconsin 54-1255) (Penicillium chrysogenum).